Consider the following 500-residue polypeptide: MATVIPGDLSEVRDTQKVPSGKRKRGETKPRKNFPCQLCDKAFNSVEKLKVHSYSHTGERPYKCIQQDCTKAFVSKYKLQRHMATHSPEKTHKCNYCEKMFHRKDHLKNHLHTHDPNKETFKCEECGKNYNTKLGFKRHLALHAATSGDLTCKVCLQTFESTGVLLEHLKSHAGKSSGGVKEKKHQCEHCDRRFYTRKDVRRHMVVHTGRKDFLCQYCAQRFGRKDHLTRHMKKSHNQELLKVKTEPVDFLDPFTCNVSVPIKDELLPVMSLPSSELLSKPFTNTLQLNLYNTPFQSMQSSGSAHQMITTLPLGMTCPIDMDTVHPSHHLSFKYPFSSTSYAISIPEKEQPLKGEIESYLMELQGGVPSSSQDSQASSSSKLGLDPQIGSLDDGAGDLSLSKSSISISDPLNTPALDFSQLFNFIPLNGPPYNPLSVGSLGMSYSQEEAHSSVSQLPPQTQDLQDPANTIGLGSLHSLSAAFTSSLSTSTTLPRFHQAFQ.

Residues 1–30 (MATVIPGDLSEVRDTQKVPSGKRKRGETKP) form a disordered region. An interaction with KPNA2 region spans residues 2-84 (ATVIPGDLSE…SKYKLQRHMA (83 aa)). Positions 22–25 (KRKR) match the Nuclear localization signal motif. 7 consecutive C2H2-type zinc fingers follow at residues 34–56 (FPCQ…SYSH), 62–86 (YKCI…MATH), 92–114 (HKCN…LHTH), 121–143 (FKCE…LALH), 150–172 (LTCK…LKSH), 185–207 (HQCE…MVVH), and 213–236 (FLCQ…KKSH). The decreased nuclear import with localization in the nucleus but also in the cytoplasm stretch occupies residues 41-242 (KAFNSVEKLK…KKSHNQELLK (202 aa)). A repression domain; contains 3 sumoylation motifs and massively decrease transcription activity region spans residues 243–384 (VKTEPVDFLD…QASSSSKLGL (142 aa)). The tract at residues 243–500 (VKTEPVDFLD…TLPRFHQAFQ (258 aa)) is activates transcription; Inhibition of nuclear import due to lack of NLS and KPNA2 interaction. Glycyl lysine isopeptide (Lys-Gly) (interchain with G-Cter in SUMO) cross-links involve residues lysine 244 and lysine 263. Residues 365-388 (GGVPSSSQDSQASSSSKLGLDPQI) form a disordered region. The span at 369 to 380 (SSSQDSQASSSS) shows a compositional bias: low complexity. The segment at 385 to 500 (DPQIGSLDDG…TLPRFHQAFQ (116 aa)) is massively activates transcription.

This sequence belongs to the krueppel C2H2-type zinc-finger protein family. As to quaternary structure, interacts with KPNA2, which escorts protein to the nucleus via interaction with nuclear localization signal. Interacts with E3 SUMO-protein ligase PIAS1, PIAS2 and PIAS4. Post-translationally, sumoylated with SUMO1; which inhibits transcriptional activity, but does not affect nuclear localization. Blockers of sumoylation pathway such as SENP3 and inactive UBE2I increases transcriptional capacity. Sumoylation is increased in the presence of PIAS1. In terms of processing, acetylated by lysine acetyltransferase EP300; which activates transcriptional capacity. Lysine residues that are sumoylated also seem to be target for acetylation. Expressed in fetal tissues such as lung, liver and kidney. Not detected or weak detection in normal adult tissues, but highly expressed in salivary gland with benign or malignant pleiomorphic adenomas with or without 8q12 aberrations, with preferential occurrence in benign tumors.

The protein resides in the nucleus. In terms of biological role, transcription factor whose activation results in up-regulation of target genes, such as IGFII, leading to uncontrolled cell proliferation: when overexpressed in cultured cells, higher proliferation rate and transformation are observed. Other target genes such as CRLF1, CRABP2, CRIP2, PIGF are strongly induced in cells with PLAG1 induction. Proto-oncogene whose ectopic expression can trigger the development of pleomorphic adenomas of the salivary gland and lipoblastomas. Overexpression is associated with up-regulation of IGFII, is frequently observed in hepatoblastoma, common primary liver tumor in childhood. Cooperates with CBFB-MYH11, a fusion gene important for myeloid leukemia. The protein is Zinc finger protein PLAG1 (PLAG1) of Homo sapiens (Human).